A 99-amino-acid polypeptide reads, in one-letter code: Large ribosomal subunit protein eL21 (99 aa).

The protein belongs to the eukaryotic ribosomal protein eL21 family.

The protein is Large ribosomal subunit protein eL21 of Staphylothermus marinus (strain ATCC 43588 / DSM 3639 / JCM 9404 / F1).